Here is a 126-residue protein sequence, read N- to C-terminus: Copper resistance protein C (126 aa).

A signal peptide spans 1 to 23 (MSILNKAILTGGLVMGVAFSAMA). His-24 is a binding site for Cu(2+). Residues Met-63, Met-66, Met-69, His-72, and Met-75 each contribute to the Cu(+) site. Residue His-115 participates in Cu(2+) binding.

Belongs to the CopC family. In terms of assembly, monomer-dimer equilibrium in solution for the apo protein. Dimerization is significantly enhanced upon binding of copper(I).

It is found in the periplasm. In terms of biological role, copper-binding protein involved in copper resistance. The protein is Copper resistance protein C of Escherichia coli.